A 447-amino-acid chain; its full sequence is MARKYFGTDGVRGRANATLTADLALRVGMAAGLAFRRGEHRHRVVIGKDTRLSGYMIENALVAGFTSVGMDVLLLGPMPTPAVGMLTRSMRADLGVMISASHNPFDDNGIKLFGPDGFKLSDQIEHEIEELIDEDLSKKLAQPMDIGRARRVEGVHARYIEYAKRTLPRDQSFEGLRVVVDCANGAAYRVAPDALWELGAEVISMGVEPDGLNINRDVGSTSPAALSAKVREVRADVGIALDGDADRVIIVDEKGHVVDGDQIMAVVAHSFKEDGRLSRDGIVATVMSNLGLERYLKDEGLTLARTSVGDRYVLERMRSDGYNVGGEQSGHIILSDYSTTGDGLLAALQVLAVVARSERPVSEVCHRFDPLPQVLKNVRYSSGKPLEHENVQSAIADAERRLANHGRLLIRPSGTEPVIRVMGEGDDFELVEGVVDEVIEALRKVAA.

Serine 101 (phosphoserine intermediate) is an active-site residue. Positions 101, 242, 244, and 246 each coordinate Mg(2+). Serine 101 is modified (phosphoserine).

This sequence belongs to the phosphohexose mutase family. Mg(2+) is required as a cofactor. In terms of processing, activated by phosphorylation.

The enzyme catalyses alpha-D-glucosamine 1-phosphate = D-glucosamine 6-phosphate. In terms of biological role, catalyzes the conversion of glucosamine-6-phosphate to glucosamine-1-phosphate. The polypeptide is Phosphoglucosamine mutase (Azorhizobium caulinodans (strain ATCC 43989 / DSM 5975 / JCM 20966 / LMG 6465 / NBRC 14845 / NCIMB 13405 / ORS 571)).